We begin with the raw amino-acid sequence, 440 residues long: C-terminal-binding protein 1 (440 aa).

Residues 1 to 70 (MGSSHLLNKG…EIHEKVLNEA (70 aa)) form an interaction with GLIS2 1 region. NAD(+) is bound by residues serine 100, 180–185 (IGLGRV), aspartate 204, 237–243 (CGLNEHN), 264–266 (TAR), and aspartate 290. Arginine 266 is a catalytic residue. The interaction with GLIS2 2 stretch occupies residues 288–360 (ALDVHESEPF…VNKDHLTAAT (73 aa)). Residue glutamate 295 is part of the active site. At serine 300 the chain carries Phosphoserine. Histidine 315 functions as the Proton donor in the catalytic mechanism. Position 315–318 (315–318 (HAAW)) interacts with NAD(+). Residues 408–440 (SHGLPPVAHPPHAPSPGQTVKPEADRDHASDQL) are disordered. Phosphoserine; by HIPK2 is present on serine 422. Lysine 428 participates in a covalent cross-link: Glycyl lysine isopeptide (Lys-Gly) (interchain with G-Cter in SUMO). The segment covering 429–440 (PEADRDHASDQL) has biased composition (basic and acidic residues).

It belongs to the D-isomer specific 2-hydroxyacid dehydrogenase family. As to quaternary structure, homo- or heterodimer. Heterodimer with CTBP2. Interacts with PRDM16; the interaction represses white adipose tissue (WAT)-specific genes expression. Interacts with GLIS2, FOXP2, HDAC4, HDAC5, HDAC9 and ZNF217. Interacts with ELK3 (via its PXDLS motif). Interacts with RBBP8 (via its PXDLS motif); the interaction is disrupted by binding to adenovirus E1A. Interacts with FOXP1, HIPK2, PNN, NRIP1, MECOM, ZFHX1B and WIZ. Interacts with ZNF366 (via PXDLS motif). Interaction with SATB1 (non-acetylated form); the interaction stabilizes its attachment to DNA and promotes transcription repression. Interacts with BCL6; the interaction is required for BCL6 transcriptional autoinhibition and inhibition of some BCL6 target genes. Interacts with IKZF4. Interacts with MCRIP1 (unphosphorylated form, via the PXDLS motif); competitively inhibiting CTBP-ZEB1 interaction. Interacts with Bassoon/BSN; this interaction targets and anchors CTBP1 to presynapses. Interacts with SIMC1. In terms of assembly, (Microbial infection) Interacts with Epstein-Barr virus EBNA3. Interacts with Epstein-Barr virus EBNA6; this interaction leads to gene repression, but also seems to interfere with the repressive function of CtBP pre-bound to DNA, leading to EBNA6 mediated up-regulation of many cellular genes. (Microbial infection) Interacts with adenovirus E1A protein (via its C-terminus); the interaction disrupts the interaction of CTBP1 with RBBP8. As to quaternary structure, (Microbial infection) Interacts with human adenovirus 5 E1A protein; this interaction seems to potentiate viral replication. It depends on NAD(+) as a cofactor. The level of phosphorylation appears to be regulated during the cell cycle. Phosphorylation by HIPK2 on Ser-422 induces proteasomal degradation. In terms of processing, ADP-ribosylated; when cells are exposed to brefeldin A. Post-translationally, sumoylation on Lys-428 is promoted by the E3 SUMO-protein ligase CBX4. As to expression, expressed in germinal center B-cells.

It is found in the cytoplasm. It localises to the nucleus. Its function is as follows. Corepressor targeting diverse transcription regulators such as GLIS2 or BCL6. Has dehydrogenase activity. Involved in controlling the equilibrium between tubular and stacked structures in the Golgi complex. Functions in brown adipose tissue (BAT) differentiation. In Homo sapiens (Human), this protein is C-terminal-binding protein 1 (CTBP1).